The chain runs to 445 residues: Phosphoglucosamine mutase (445 aa).

Serine 102 acts as the Phosphoserine intermediate in catalysis. Mg(2+) contacts are provided by serine 102, aspartate 241, aspartate 243, and aspartate 245. Residue serine 102 is modified to Phosphoserine.

This sequence belongs to the phosphohexose mutase family. Requires Mg(2+) as cofactor. Post-translationally, activated by phosphorylation.

It carries out the reaction alpha-D-glucosamine 1-phosphate = D-glucosamine 6-phosphate. In terms of biological role, catalyzes the conversion of glucosamine-6-phosphate to glucosamine-1-phosphate. This Serratia proteamaculans (strain 568) protein is Phosphoglucosamine mutase.